The primary structure comprises 254 residues: 3-deoxy-manno-octulosonate cytidylyltransferase (254 aa).

It belongs to the KdsB family.

It is found in the cytoplasm. It catalyses the reaction 3-deoxy-alpha-D-manno-oct-2-ulosonate + CTP = CMP-3-deoxy-beta-D-manno-octulosonate + diphosphate. It participates in nucleotide-sugar biosynthesis; CMP-3-deoxy-D-manno-octulosonate biosynthesis; CMP-3-deoxy-D-manno-octulosonate from 3-deoxy-D-manno-octulosonate and CTP: step 1/1. It functions in the pathway bacterial outer membrane biogenesis; lipopolysaccharide biosynthesis. In terms of biological role, activates KDO (a required 8-carbon sugar) for incorporation into bacterial lipopolysaccharide in Gram-negative bacteria. This is 3-deoxy-manno-octulosonate cytidylyltransferase from Pseudoalteromonas atlantica (strain T6c / ATCC BAA-1087).